The sequence spans 264 residues: Putative hydro-lyase Psyr_0498 (264 aa).

It belongs to the D-glutamate cyclase family.

The chain is Putative hydro-lyase Psyr_0498 from Pseudomonas syringae pv. syringae (strain B728a).